A 323-amino-acid polypeptide reads, in one-letter code: MGSSGLARLQGLFAVYKPPGLKWLHVRETVELQLLKGLNAQQPSAPEQHVRFLLGPVEGSEEKKLTLTATSVPSLTTHRLVRGPAFRNLKIGVGHRLDVQASGVLVLAVGHGRSLLTDMYDAHLTKDYTVRGLLGKATDNFCEDGQLIEKTTYDHVTRERLDRILAMIQGSHQKALVMYSNLDLKSQEAYERAVQGVIRPMNKSPMLIAGIRCLHFAPPEFLLEVQCMHETQQQLRRLVHEIGLELKTTAVCMQVRRTRDGFFGLDDALLRTQWDLHSIQDAIQTAAPRVARELRKNLSLMSGHQQQLPSAGQPWASRVQAPL.

Asp-98 acts as the Nucleophile in catalysis. A disordered region spans residues 302-323; sequence SGHQQQLPSAGQPWASRVQAPL.

Belongs to the pseudouridine synthase TruB family. As to quaternary structure, forms a regulatory protein-RNA complex, consisting of RCC1L, NGRN, RPUSD3, RPUSD4, TRUB2, FASTKD2 and 16S mt-rRNA.

The protein localises to the mitochondrion matrix. It carries out the reaction a uridine in mRNA = a pseudouridine in mRNA. The catalysed reaction is uridine(55) in tRNA = pseudouridine(55) in tRNA. In terms of biological role, minor enzyme contributing to the isomerization of uridine to pseudouridine (pseudouridylation) of specific mitochondrial mRNAs (mt-mRNAs) such as COXI and COXIII mt-mRNAs. As a component of a functional protein-RNA module, consisting of RCC1L, NGRN, RPUSD3, RPUSD4, TRUB2, FASTKD2 and 16S mitochondrial ribosomal RNA (16S mt-rRNA), controls 16S mt-rRNA abundance and is required for intra-mitochondrial translation. Also catalyzes pseudouridylation of some tRNAs, including synthesis of pseudouridine(55) from uracil-55, in the psi GC loop of a subset of tRNAs. This is Pseudouridylate synthase TRUB2, mitochondrial from Rattus norvegicus (Rat).